Reading from the N-terminus, the 968-residue chain is RNA polymerase-associated protein RapA (968 aa).

In terms of domain architecture, Helicase ATP-binding spans 164-334; it reads EVGQRHAPRV…FARLRLLDPD (171 aa). An ATP-binding site is contributed by 177 to 184; sequence DEVGLGKT. Residues 280–283 carry the DEAH box motif; that stretch reads DEAH. The Helicase C-terminal domain maps to 490–644; the sequence is RVEWLLNYLV…TCPTGRTIYD (155 aa).

It belongs to the SNF2/RAD54 helicase family. RapA subfamily. As to quaternary structure, interacts with the RNAP. Has a higher affinity for the core RNAP than for the holoenzyme. Its ATPase activity is stimulated by binding to RNAP.

In terms of biological role, transcription regulator that activates transcription by stimulating RNA polymerase (RNAP) recycling in case of stress conditions such as supercoiled DNA or high salt concentrations. Probably acts by releasing the RNAP, when it is trapped or immobilized on tightly supercoiled DNA. Does not activate transcription on linear DNA. Probably not involved in DNA repair. In Yersinia pseudotuberculosis serotype O:1b (strain IP 31758), this protein is RNA polymerase-associated protein RapA.